A 34-amino-acid chain; its full sequence is NU-buthitoxin-Ptr1a (34 aa).

3 cysteine pairs are disulfide-bonded: cysteine 6–cysteine 27, cysteine 12–cysteine 32, and cysteine 16–cysteine 34.

In terms of tissue distribution, expressed by the venom gland.

The protein resides in the secreted. Toxin that acts as an agonist on melanocortin receptors (MC1R, MC3R, MC5R, MC5R). After binding to MC1R, the peptide activates the hMC1R/Gs pathway, but after binding to MC4R, it is not able to activate or antagonize the MC4R/Gs pathway. Inhibits melanocyte stimulating hormone (MSH)-binding to human receptors (Ki=2.9 uM to MC1R, Ki=3.9 uM to MC3R, Ki=2.6 uM to MC4R, Ki=2.2 uM to MC5R). This toxin is structurally unrelated to the natural agonists. This Parabuthus transvaalicus (Transvaal thick-tailed scorpion) protein is NU-buthitoxin-Ptr1a.